Reading from the N-terminus, the 65-residue chain is Large ribosomal subunit protein bL35 (65 aa).

Belongs to the bacterial ribosomal protein bL35 family.

This Nitrosomonas eutropha (strain DSM 101675 / C91 / Nm57) protein is Large ribosomal subunit protein bL35.